The sequence spans 355 residues: Peptide chain release factor 1 (355 aa).

Gln233 bears the N5-methylglutamine mark.

It belongs to the prokaryotic/mitochondrial release factor family. Post-translationally, methylated by PrmC. Methylation increases the termination efficiency of RF1.

It is found in the cytoplasm. Peptide chain release factor 1 directs the termination of translation in response to the peptide chain termination codons UAG and UAA. The polypeptide is Peptide chain release factor 1 (Dehalococcoides mccartyi (strain ATCC BAA-2100 / JCM 16839 / KCTC 5957 / BAV1)).